Here is a 295-residue protein sequence, read N- to C-terminus: Glutamyl-Q tRNA(Asp) synthetase (295 aa).

L-glutamate is bound by residues 6 to 10 (RFAPS) and Glu42. The short motif at 9-19 (PSPTGAMHLGN) is the 'HIGH' region element. Zn(2+)-binding residues include Cys93, Cys95, Tyr118, and Cys122. Positions 177 and 195 each coordinate L-glutamate. The 'KMSKS' region signature appears at 233 to 237 (RLAKR). Lys236 contacts ATP.

It belongs to the class-I aminoacyl-tRNA synthetase family. GluQ subfamily. Requires Zn(2+) as cofactor.

Functionally, catalyzes the tRNA-independent activation of glutamate in presence of ATP and the subsequent transfer of glutamate onto a tRNA(Asp). Glutamate is transferred on the 2-amino-5-(4,5-dihydroxy-2-cyclopenten-1-yl) moiety of the queuosine in the wobble position of the QUC anticodon. In Deinococcus radiodurans (strain ATCC 13939 / DSM 20539 / JCM 16871 / CCUG 27074 / LMG 4051 / NBRC 15346 / NCIMB 9279 / VKM B-1422 / R1), this protein is Glutamyl-Q tRNA(Asp) synthetase.